The chain runs to 211 residues: Arginine exporter protein ArgO (211 aa).

Transmembrane regions (helical) follow at residues 1 to 21 (MFSYYFQGLALGAAMILPLGP), 37 to 57 (IMIALLCAISDLVLICAGIFG), 68 to 88 (LLALVTWGGVVFLLWYGFGAF), 111 to 131 (IIATMLAVTWLNPHVYLDTFV), 147 to 167 (WFALGTISASFLWFFGLAILA), and 182 to 202 (IINLVVGCVMWFIALQLARDG).

It belongs to the LysE/ArgO transporter (TC 2.A.75) family.

It localises to the cell inner membrane. It catalyses the reaction L-arginine(in) = L-arginine(out). In terms of biological role, involved in the export of arginine. Important to control the intracellular level of arginine and the correct balance between arginine and lysine. This is Arginine exporter protein ArgO from Escherichia coli O157:H7.